Here is an 843-residue protein sequence, read N- to C-terminus: Complement component C7 (843 aa).

A signal peptide spans 1 to 22 (MKVISLFILVGFIGEFQSFSSA). The TSP type-1 1 domain occupies 27–80 (NCQWDFYAPWSECNGCTKTQTRRRSVAVYGQYGGQPCVGNAFETQSCEPTRGCP). Intrachain disulfides connect cysteine 28/cysteine 63, cysteine 39/cysteine 73, cysteine 42/cysteine 79, cysteine 85/cysteine 96, cysteine 91/cysteine 109, cysteine 103/cysteine 119, and cysteine 128/cysteine 165. Residue tryptophan 36 is glycosylated (C-linked (Man) tryptophan). The LDL-receptor class A domain occupies 83–121 (EGCGERFRCFSGQCISKSLVCNGDSDCDEDSADEDRCED). The segment covering 108-120 (DCDEDSADEDRCE) has biased composition (acidic residues). A disordered region spans residues 108 to 143 (DCDEDSADEDRCEDSERRPSCDIDKPPPNIELTGNG). Basic and acidic residues predominate over residues 121 to 132 (DSERRPSCDIDK). The MACPF domain maps to 124–456 (RRPSCDIDKP…EYLDEFDPCH (333 aa)). Residue asparagine 202 is glycosylated (N-linked (GlcNAc...) asparagine). The tract at residues 219–240 (SRKRSFFRSSSSSSRSYTSHTN) is disordered. Over residues 225–234 (FRSSSSSSRS) the composition is skewed to low complexity. 12 cysteine pairs are disulfide-bonded: cysteine 337-cysteine 353, cysteine 433-cysteine 560, cysteine 455-cysteine 505, cysteine 457-cysteine 473, cysteine 460-cysteine 475, cysteine 477-cysteine 486, cysteine 512-cysteine 545, cysteine 523-cysteine 535, cysteine 571-cysteine 613, cysteine 599-cysteine 626, cysteine 631-cysteine 673, and cysteine 659-cysteine 688. An EGF-like domain is found at 457–487 (CRPCQNGGLATVEGTHCLCHCKPYTFGAACE). Positions 500-549 (DGGWSCWSSWSPCVQGKKTRSRECNNPPPSGGGRSCVGETTESTQCEDEE) constitute a TSP type-1 2 domain. C-linked (Man) tryptophan; partial glycans are attached at residues tryptophan 503, tryptophan 506, and tryptophan 509. The disordered stretch occupies residues 516–538 (KKTRSRECNNPPPSGGGRSCVGE). 2 CCP regions span residues 545 to 615 (CEDE…RCGE) and 616 to 693 (DLRW…QKEN). Sushi domains follow at residues 569-628 (EFCP…HCQK) and 629-690 (IACV…RCVQ). Factor I module (FIM) stretches follow at residues 695 to 770 (LTQA…ASAE) and 771 to 843 (KACG…AETQ). O-linked (GalNAc...) threonine glycosylation occurs at threonine 696. Disulfide bonds link cysteine 702/cysteine 713, cysteine 715/cysteine 750, cysteine 721/cysteine 743, cysteine 728/cysteine 763, cysteine 773/cysteine 782, cysteine 776/cysteine 789, cysteine 791/cysteine 825, cysteine 797/cysteine 818, and cysteine 805/cysteine 838. An N-linked (GlcNAc...) (complex) asparagine glycan is attached at asparagine 754.

The protein belongs to the complement C6/C7/C8/C9 family. In terms of assembly, monomer or dimer; as a C5b-7 complex it can also form multimeric rosettes. Component of the membrane attack complex (MAC), composed of complement C5b, C6, C7, C8A, C8B, C8G and multiple copies of the pore-forming subunit C9. In terms of processing, C-, N- and O-glycosylated. O-glycosylated with core 1 or possibly core 8 glycans.

The protein resides in the secreted. It is found in the target cell membrane. Membrane attack complex (MAC) assembly is inhibited by CD59, thereby protecting self-cells from damage during complement activation. MAC assembly is also inhibited by clusterin (CLU) chaperones that inhibit polymerization of C9. Its function is as follows. Component of the membrane attack complex (MAC), a multiprotein complex activated by the complement cascade, which inserts into a target cell membrane and forms a pore, leading to target cell membrane rupture and cell lysis. The MAC is initiated by proteolytic cleavage of C5 into complement C5b in response to the classical, alternative, lectin and GZMK complement pathways. The complement pathways consist in a cascade of proteins that leads to phagocytosis and breakdown of pathogens and signaling that strengthens the adaptive immune system. C7 serves as a membrane anchor. During MAC assembly, associates with C5b and C6 to form the C5b-7 complex, a key lipophilic precursor of the MAC complex, which associates with the outer leaflet and reduces the energy for membrane bending. This chain is Complement component C7, found in Homo sapiens (Human).